Here is a 943-residue protein sequence, read N- to C-terminus: Synaptotagmin-like protein 2 (943 aa).

A RabBD domain is found at 1-57 (MIDLSFLTEEEQEAIMKVLQRDAALKRAEEERVRHLPEKVKDDQQLKNMSGQWFYEA). 3 disordered regions span residues 77 to 99 (RKKRPQVADEQSKDRANRAKESW), 118 to 291 (EEPE…VRFH), and 361 to 613 (ESDR…SNSG). Residues 82 to 99 (QVADEQSKDRANRAKESW) show a composition bias toward basic and acidic residues. Low complexity predominate over residues 125–138 (APASPSSSVVNPVS). Residues 174–192 (SQQTKNEQSKNGKTGLFQT) are compositionally biased toward polar residues. Over residues 194-205 (KEGELSESKEES) the composition is skewed to basic and acidic residues. 3 stretches are compositionally biased toward polar residues: residues 382–394 (PQPSQYTNGLPFQ), 404–416 (KNETSQPTTSGSF), and 426–440 (EFLTTRAQSTENSHT). A compositionally biased stretch (basic and acidic residues) spans 524 to 537 (ELVRSAEDDQKADQ). Positions 549 to 560 (STVSSQPDNQFS) are enriched in polar residues. Residues 603-613 (SSLTNLSSNSG) are compositionally biased toward low complexity. C2 domains are found at residues 637 to 762 (VKGS…LKWY) and 777 to 906 (NRGE…VDWM).

As to quaternary structure, monomer. Binds NRXN1. Binds RAB27A that has been activated by GTP-binding via its N-terminus. Interacts with RAB27B.

It localises to the cell membrane. In terms of biological role, may act as a RAB27A effector protein and play a role in cytotoxic granule exocytosis in lymphocytes. This is Synaptotagmin-like protein 2 (SYTL2) from Bos taurus (Bovine).